The primary structure comprises 595 residues: Aspartate--tRNA(Asp/Asn) ligase (595 aa).

Residue Glu-178 participates in L-aspartate binding. Positions 202–205 (QLFK) are aspartate. Arg-224 is a binding site for L-aspartate. Residues 224-226 (RDE) and Gln-233 contribute to the ATP site. L-aspartate is bound at residue His-458. Glu-488 provides a ligand contact to ATP. Residue Arg-495 coordinates L-aspartate. An ATP-binding site is contributed by 540 to 543 (GLDR).

It belongs to the class-II aminoacyl-tRNA synthetase family. Type 1 subfamily. As to quaternary structure, homodimer.

Its subcellular location is the cytoplasm. The catalysed reaction is tRNA(Asx) + L-aspartate + ATP = L-aspartyl-tRNA(Asx) + AMP + diphosphate. Its function is as follows. Aspartyl-tRNA synthetase with relaxed tRNA specificity since it is able to aspartylate not only its cognate tRNA(Asp) but also tRNA(Asn). Reaction proceeds in two steps: L-aspartate is first activated by ATP to form Asp-AMP and then transferred to the acceptor end of tRNA(Asp/Asn). In Trichodesmium erythraeum (strain IMS101), this protein is Aspartate--tRNA(Asp/Asn) ligase.